The following is a 345-amino-acid chain: Dihydroorotase (345 aa).

Residues His13 and His15 each contribute to the Zn(2+) site. Substrate contacts are provided by residues 15-17 (HLR) and Asn41. Lys99, His136, and His174 together coordinate Zn(2+). Lys99 carries the post-translational modification N6-carboxylysine. His136 contacts substrate. Leu219 lines the substrate pocket. Zn(2+) is bound at residue Asp247. Asp247 is an active-site residue. Substrate-binding residues include His251 and Ala263.

This sequence belongs to the metallo-dependent hydrolases superfamily. DHOase family. Class II DHOase subfamily. Homodimer. Requires Zn(2+) as cofactor.

The enzyme catalyses (S)-dihydroorotate + H2O = N-carbamoyl-L-aspartate + H(+). The protein operates within pyrimidine metabolism; UMP biosynthesis via de novo pathway; (S)-dihydroorotate from bicarbonate: step 3/3. In terms of biological role, catalyzes the reversible cyclization of carbamoyl aspartate to dihydroorotate. The protein is Dihydroorotase of Hahella chejuensis (strain KCTC 2396).